Here is a 337-residue protein sequence, read N- to C-terminus: DNA-directed RNA polymerase subunit alpha (337 aa).

Residues 1–233 are alpha N-terminal domain (alpha-NTD); the sequence is MIQKNWQELI…DQLSVFVNFK (233 aa). The alpha C-terminal domain (alpha-CTD) stretch occupies residues 249 to 337; it reads FNPALLKKVD…DLAKHYEDQY (89 aa).

It belongs to the RNA polymerase alpha chain family. Homodimer. The RNAP catalytic core consists of 2 alpha, 1 beta, 1 beta' and 1 omega subunit. When a sigma factor is associated with the core the holoenzyme is formed, which can initiate transcription.

It catalyses the reaction RNA(n) + a ribonucleoside 5'-triphosphate = RNA(n+1) + diphosphate. In terms of biological role, DNA-dependent RNA polymerase catalyzes the transcription of DNA into RNA using the four ribonucleoside triphosphates as substrates. This is DNA-directed RNA polymerase subunit alpha from Bartonella bacilliformis (strain ATCC 35685 / KC583 / Herrer 020/F12,63).